The chain runs to 169 residues: Peptide deformylase (169 aa).

Fe cation is bound by residues Cys-92 and His-134. Glu-135 is a catalytic residue. His-138 is a binding site for Fe cation.

This sequence belongs to the polypeptide deformylase family. It depends on Fe(2+) as a cofactor.

It catalyses the reaction N-terminal N-formyl-L-methionyl-[peptide] + H2O = N-terminal L-methionyl-[peptide] + formate. Its function is as follows. Removes the formyl group from the N-terminal Met of newly synthesized proteins. Requires at least a dipeptide for an efficient rate of reaction. N-terminal L-methionine is a prerequisite for activity but the enzyme has broad specificity at other positions. The chain is Peptide deformylase from Cellvibrio japonicus (strain Ueda107) (Pseudomonas fluorescens subsp. cellulosa).